The chain runs to 316 residues: Daunorubicin resistance ATP-binding protein DrrA3 (316 aa).

Positions isoleucine 6–leucine 236 constitute an ABC transporter domain. An ATP-binding site is contributed by glycine 38 to threonine 45.

It belongs to the ABC transporter superfamily. Drug exporter-1 (DrugE1) (TC 3.A.1.105) family. In terms of assembly, the complex is probably composed of two ATP-binding proteins (DrrA3) and two transmembrane proteins (DrrB3).

It is found in the cell membrane. It carries out the reaction daunorubicin(in) + ATP + H2O = daunorubicin(out) + ADP + phosphate + H(+). In terms of biological role, part of the ABC transporter complex DrrA3B3 involved in daunorubicin efflux. Responsible for energy coupling to the transport system. Confers self-resistance to daunorubicin, an antibiotic produced by S.coeruleorubidus. The efficiency of DrrA3B3 to export daunorubicin is probably lower than that of DrrA1B1 or DrrA2B2. This is Daunorubicin resistance ATP-binding protein DrrA3 from Streptomyces coeruleorubidus.